The sequence spans 488 residues: 3-octaprenyl-4-hydroxybenzoate carboxy-lyase (488 aa).

N172 contributes to the Mn(2+) binding site. Prenylated FMN is bound by residues 175–177 (IYR), 189–191 (RWL), and 194–195 (RG). A Mn(2+)-binding site is contributed by E238. The active-site Proton donor is the D287.

Belongs to the UbiD family. Homohexamer. Requires prenylated FMN as cofactor. The cofactor is Mn(2+).

The protein resides in the cell membrane. The enzyme catalyses a 4-hydroxy-3-(all-trans-polyprenyl)benzoate + H(+) = a 2-(all-trans-polyprenyl)phenol + CO2. Its pathway is cofactor biosynthesis; ubiquinone biosynthesis. Catalyzes the decarboxylation of 3-octaprenyl-4-hydroxy benzoate to 2-octaprenylphenol, an intermediate step in ubiquinone biosynthesis. The polypeptide is 3-octaprenyl-4-hydroxybenzoate carboxy-lyase (Pseudomonas aeruginosa (strain LESB58)).